A 372-amino-acid chain; its full sequence is 18-hydroxynorfluorocurarine reductase (372 aa).

Positions 47, 50, 69, 70, 100, 103, 106, 114, and 172 each coordinate Zn(2+). Residues 197 to 202 (GLGGIG), lysine 226, 283 to 285 (LGA), serine 307, and arginine 354 contribute to the NADP(+) site.

It belongs to the zinc-containing alcohol dehydrogenase family. In terms of assembly, homodimer. It depends on Zn(2+) as a cofactor. Mainly expressed in roots.

The enzyme catalyses (19E)-cur-19-en-17-al + NADP(+) = norfluorocurarine + NADPH + H(+). It carries out the reaction 17,18-epoxy-17-hydroxycur-19-ene + NADP(+) = 18-hydroxynorfluorocurarine + NADPH + H(+). It functions in the pathway alkaloid biosynthesis. Functionally, alcohol dehydrogenase involved in the biosynthesis of curare monoterpene indole alkaloids (MIAs), natural products such as strychnine, a neurotoxic compound used as a pesticide to control rodents, and its pharmacologically active derivatives, including brucine, used to regulate blood pressure. Curare alkaloids act as animal glycine receptor antagonists. Catalyzes the conversion of norfluorocurarine to desoxy Wieland-Gumlich aldehyde, and of 18-OH norfluorocurarine to Wieland-Gumlich aldehyde. This Strychnos nux-vomica (Poison nut) protein is 18-hydroxynorfluorocurarine reductase.